Reading from the N-terminus, the 200-residue chain is HTH-type transcriptional regulator BetI (200 aa).

Positions 8–68 constitute an HTH tetR-type domain; the sequence is SIRKQQLIQA…AAMRHIQYQL (61 aa). Positions 31–50 form a DNA-binding region, H-T-H motif; the sequence is SIALIARKAGVSNGIISHYF.

Its pathway is amine and polyamine biosynthesis; betaine biosynthesis via choline pathway [regulation]. Its function is as follows. Repressor involved in the biosynthesis of the osmoprotectant glycine betaine. It represses transcription of the choline transporter BetT and the genes of BetAB involved in the synthesis of glycine betaine. The sequence is that of HTH-type transcriptional regulator BetI from Proteus mirabilis (strain HI4320).